The sequence spans 298 residues: GTP cyclohydrolase FolE2 (298 aa).

It belongs to the GTP cyclohydrolase IV family.

It carries out the reaction GTP + H2O = 7,8-dihydroneopterin 3'-triphosphate + formate + H(+). Its pathway is cofactor biosynthesis; 7,8-dihydroneopterin triphosphate biosynthesis; 7,8-dihydroneopterin triphosphate from GTP: step 1/1. Functionally, converts GTP to 7,8-dihydroneopterin triphosphate. The sequence is that of GTP cyclohydrolase FolE2 from Pseudomonas fluorescens (strain SBW25).